The sequence spans 317 residues: Ribosomal RNA small subunit methyltransferase A (317 aa).

The S-adenosyl-L-methionine site is built by Asn37, Val39, Gly64, Glu85, Asp115, and Asn134. The segment at 293-317 (GGSDEATSTGRDARAPDISGHASAS) is disordered.

This sequence belongs to the class I-like SAM-binding methyltransferase superfamily. rRNA adenine N(6)-methyltransferase family. RsmA subfamily.

The protein localises to the cytoplasm. It carries out the reaction adenosine(1518)/adenosine(1519) in 16S rRNA + 4 S-adenosyl-L-methionine = N(6)-dimethyladenosine(1518)/N(6)-dimethyladenosine(1519) in 16S rRNA + 4 S-adenosyl-L-homocysteine + 4 H(+). Specifically dimethylates two adjacent adenosines (A1518 and A1519) in the loop of a conserved hairpin near the 3'-end of 16S rRNA in the 30S particle. May play a critical role in biogenesis of 30S subunits. In Mycobacterium bovis (strain BCG / Tokyo 172 / ATCC 35737 / TMC 1019), this protein is Ribosomal RNA small subunit methyltransferase A.